A 488-amino-acid polypeptide reads, in one-letter code: Ribulose bisphosphate carboxylase large chain (488 aa).

2 residues coordinate substrate: Asn127 and Thr177. Catalysis depends on Lys179, which acts as the Proton acceptor. Lys181 contributes to the substrate binding site. Residues Lys205, Asp207, and Glu208 each coordinate Mg(2+). Lys205 is modified (N6-carboxylysine). Residue His297 is the Proton acceptor of the active site. Substrate-binding residues include Arg298, His330, and Ser382.

This sequence belongs to the RuBisCO large chain family. Type I subfamily. As to quaternary structure, heterohexadecamer of 8 large chains and 8 small chains. Requires Mg(2+) as cofactor.

The protein localises to the plastid. The protein resides in the chloroplast. The enzyme catalyses 2 (2R)-3-phosphoglycerate + 2 H(+) = D-ribulose 1,5-bisphosphate + CO2 + H2O. It carries out the reaction D-ribulose 1,5-bisphosphate + O2 = 2-phosphoglycolate + (2R)-3-phosphoglycerate + 2 H(+). Functionally, ruBisCO catalyzes two reactions: the carboxylation of D-ribulose 1,5-bisphosphate, the primary event in carbon dioxide fixation, as well as the oxidative fragmentation of the pentose substrate in the photorespiration process. Both reactions occur simultaneously and in competition at the same active site. This chain is Ribulose bisphosphate carboxylase large chain, found in Antithamnion sp. (Red alga).